The following is a 280-amino-acid chain: tRNA pseudouridine synthase A (280 aa).

The active-site Nucleophile is the D60. Y119 lines the substrate pocket.

It belongs to the tRNA pseudouridine synthase TruA family. In terms of assembly, homodimer.

The enzyme catalyses uridine(38/39/40) in tRNA = pseudouridine(38/39/40) in tRNA. Formation of pseudouridine at positions 38, 39 and 40 in the anticodon stem and loop of transfer RNAs. This is tRNA pseudouridine synthase A from Treponema pallidum (strain Nichols).